The following is a 278-amino-acid chain: Phosphoenolpyruvate carboxylase kinase 2 (278 aa).

Residues 11–269 (YQLCDEIGRG…AEDALRHSWM (259 aa)) form the Protein kinase domain. Residues 17 to 25 (IGRGRFGTI) and K40 each bind ATP. D137 functions as the Proton acceptor in the catalytic mechanism.

The protein belongs to the protein kinase superfamily. Ser/Thr protein kinase family. Expressed in flowers and roots, and at lower levels in cauline leaves. Barely detectable in rosette leaves and stems.

The enzyme catalyses L-seryl-[protein] + ATP = O-phospho-L-seryl-[protein] + ADP + H(+). It catalyses the reaction L-threonyl-[protein] + ATP = O-phospho-L-threonyl-[protein] + ADP + H(+). Calcium-independent kinase involved in light-dependent phosphoenolpyruvate carboxylase phosphorylation. This Arabidopsis thaliana (Mouse-ear cress) protein is Phosphoenolpyruvate carboxylase kinase 2 (PPCK2).